A 92-amino-acid chain; its full sequence is Alpha-conotoxin-like Rt20.1 (92 aa).

The signal sequence occupies residues 1 to 24 (MPKLEMMLLVLLILPLSYFSAAGG). Positions 25-45 (QVVQGDLRSDVLARYLQRGDR) are excised as a propeptide. E49 carries the post-translational modification 4-carboxyglutamate. At P55 the chain carries 4-hydroxyproline. 4 disulfides stabilise this stretch: C63–C72, C68–C80, C73–C90, and C78–C92.

This sequence belongs to the conotoxin D superfamily. As to quaternary structure, hetero-, homo- or pseudo-homodimer (identical sequence, different post-translational modifications). As to expression, expressed by the venom duct.

It is found in the secreted. Functionally, alpha-conotoxins act on postsynaptic membranes, they bind to the nicotinic acetylcholine receptors (nAChR) and thus inhibit them. Through its two C-terminal domains, this homodimeric protein would bind to two nAChR allosteric sites, located outside the nAChR C-loop of the principal binding face and at the adjacent binding interface in a clockwise direction. This toxin specifically blocks mammalian neuronal nAChR of the alpha-7/CHRNA7, alpha-3-beta-2/CHRNA3-CHRNB2 and alpha-4-beta-2/CHRNA4-CHRNB2 subtypes. The sequence is that of Alpha-conotoxin-like Rt20.1 from Conus rattus (Rat cone).